Consider the following 317-residue polypeptide: Ribosomal protein L11 methyltransferase (317 aa).

Residues Thr-158, Gly-179, Asp-201, and Asn-244 each contribute to the S-adenosyl-L-methionine site.

It belongs to the methyltransferase superfamily. PrmA family.

It localises to the cytoplasm. It catalyses the reaction L-lysyl-[protein] + 3 S-adenosyl-L-methionine = N(6),N(6),N(6)-trimethyl-L-lysyl-[protein] + 3 S-adenosyl-L-homocysteine + 3 H(+). In terms of biological role, methylates ribosomal protein L11. The polypeptide is Ribosomal protein L11 methyltransferase (Streptococcus pyogenes serotype M12 (strain MGAS2096)).